The chain runs to 490 residues: Betaine aldehyde dehydrogenase (490 aa).

Residues Ser26, Ile27, and Asp93 each contribute to the K(+) site. Gly150–Trp152 lines the NAD(+) pocket. Lys162 functions as the Charge relay system in the catalytic mechanism. Residue Lys176–Glu179 participates in NAD(+) binding. A K(+)-binding site is contributed by Val180. Residue Gly230 to Thr233 participates in NAD(+) binding. Leu246 serves as a coordination point for K(+). Residue Glu252 is the Proton acceptor of the active site. NAD(+) is bound by residues Gly254, Cys286, and Glu387. The active-site Nucleophile is the Cys286. Cys286 is subject to Cysteine sulfenic acid (-SOH). Lys457 and Gly460 together coordinate K(+). Catalysis depends on Glu464, which acts as the Charge relay system.

This sequence belongs to the aldehyde dehydrogenase family. In terms of assembly, dimer of dimers. The cofactor is K(+).

The enzyme catalyses betaine aldehyde + NAD(+) + H2O = glycine betaine + NADH + 2 H(+). It functions in the pathway amine and polyamine biosynthesis; betaine biosynthesis via choline pathway; betaine from betaine aldehyde: step 1/1. In terms of biological role, involved in the biosynthesis of the osmoprotectant glycine betaine. Catalyzes the irreversible oxidation of betaine aldehyde to the corresponding acid. The protein is Betaine aldehyde dehydrogenase of Pseudomonas syringae pv. tomato (strain ATCC BAA-871 / DC3000).